The chain runs to 353 residues: Photosystem II D2 protein (353 aa).

Residue Thr-2 is modified to N-acetylthreonine. At Thr-2 the chain carries Phosphothreonine. The chain crosses the membrane as a helical span at residues 41–61; the sequence is CAYFALGGWLTGTTFVTSWYT. His-118 serves as a coordination point for chlorophyll a. Residues 125-141 form a helical membrane-spanning segment; the sequence is GFMLRQFEIARSVGLRP. Pheophytin a is bound by residues Gln-130 and Asn-143. Residues 153 to 166 form a helical membrane-spanning segment; that stretch reads VFVSVFLIYPLGQS. Residue His-198 participates in chlorophyll a binding. Residues 208-228 traverse the membrane as a helical segment; that stretch reads AALLCAIHGATVENTIFEDGD. Residues His-215 and Phe-262 each coordinate a plastoquinone. His-215 is a binding site for Fe cation. Residue His-269 participates in Fe cation binding. Residues 279–295 traverse the membrane as a helical segment; the sequence is GLWMSAIGVVGLALNLR.

Belongs to the reaction center PufL/M/PsbA/D family. In terms of assembly, PSII is composed of 1 copy each of membrane proteins PsbA, PsbB, PsbC, PsbD, PsbE, PsbF, PsbH, PsbI, PsbJ, PsbK, PsbL, PsbM, PsbT, PsbX, PsbY, PsbZ, Psb30/Ycf12, at least 3 peripheral proteins of the oxygen-evolving complex and a large number of cofactors. It forms dimeric complexes. Requires The D1/D2 heterodimer binds P680, chlorophylls that are the primary electron donor of PSII, and subsequent electron acceptors. It shares a non-heme iron and each subunit binds pheophytin, quinone, additional chlorophylls, carotenoids and lipids. There is also a Cl(-1) ion associated with D1 and D2, which is required for oxygen evolution. The PSII complex binds additional chlorophylls, carotenoids and specific lipids. as cofactor.

It is found in the plastid. The protein resides in the chloroplast thylakoid membrane. The catalysed reaction is 2 a plastoquinone + 4 hnu + 2 H2O = 2 a plastoquinol + O2. Photosystem II (PSII) is a light-driven water:plastoquinone oxidoreductase that uses light energy to abstract electrons from H(2)O, generating O(2) and a proton gradient subsequently used for ATP formation. It consists of a core antenna complex that captures photons, and an electron transfer chain that converts photonic excitation into a charge separation. The D1/D2 (PsbA/PsbD) reaction center heterodimer binds P680, the primary electron donor of PSII as well as several subsequent electron acceptors. D2 is needed for assembly of a stable PSII complex. This Staurastrum punctulatum (Green alga) protein is Photosystem II D2 protein.